Consider the following 130-residue polypeptide: Small ribosomal subunit protein uS8 (130 aa).

It belongs to the universal ribosomal protein uS8 family. As to quaternary structure, part of the 30S ribosomal subunit. Contacts proteins S5 and S12.

Functionally, one of the primary rRNA binding proteins, it binds directly to 16S rRNA central domain where it helps coordinate assembly of the platform of the 30S subunit. The polypeptide is Small ribosomal subunit protein uS8 (Enterobacter sp. (strain 638)).